The primary structure comprises 1451 residues: Cleavage and polyadenylation specificity factor subunit 1 (1451 aa).

2 stretches are compositionally biased toward basic and acidic residues: residues 401-422 (QETP…EPPN) and 561-572 (EEKREPTIEDDK). Disordered stretches follow at residues 401–432 (QETP…SNWA), 548–572 (EKPS…EDDK), and 753–789 (GESN…RQEP). The short motif at 901 to 916 (KKMPHNINYREKKVKV) is the Nuclear localization signal element.

Belongs to the CPSF1 family.

It localises to the nucleus. The protein localises to the nucleoplasm. Functionally, component of the cleavage and polyadenylation specificity factor (CPSF) complex that plays a key role in pre-mRNA 3'-end formation, recognizing the AAUAAA signal sequence and interacting with poly(A) polymerase and other factors to bring about cleavage and poly(A) addition. This subunit is involved in the RNA recognition step of the polyadenylation reaction. Plays a role in eye morphogenesis and the development of retinal ganglion cell projections to the tectum. This chain is Cleavage and polyadenylation specificity factor subunit 1 (cpsf1), found in Danio rerio (Zebrafish).